Consider the following 115-residue polypeptide: Large ribosomal subunit protein bL19 (115 aa).

It belongs to the bacterial ribosomal protein bL19 family.

This protein is located at the 30S-50S ribosomal subunit interface and may play a role in the structure and function of the aminoacyl-tRNA binding site. The chain is Large ribosomal subunit protein bL19 (rplS) from Buchnera aphidicola subsp. Acyrthosiphon pisum (strain APS) (Acyrthosiphon pisum symbiotic bacterium).